We begin with the raw amino-acid sequence, 234 residues long: tRNA (guanine-N(1)-)-methyltransferase (234 aa).

Residues Gly110 and 134 to 139 (IGDYVL) each bind S-adenosyl-L-methionine.

This sequence belongs to the RNA methyltransferase TrmD family. In terms of assembly, homodimer.

It localises to the cytoplasm. It catalyses the reaction guanosine(37) in tRNA + S-adenosyl-L-methionine = N(1)-methylguanosine(37) in tRNA + S-adenosyl-L-homocysteine + H(+). In terms of biological role, specifically methylates guanosine-37 in various tRNAs. In Tropheryma whipplei (strain TW08/27) (Whipple's bacillus), this protein is tRNA (guanine-N(1)-)-methyltransferase.